Reading from the N-terminus, the 575-residue chain is Flagellin A (575 aa).

A run of 3 repeats spans residues 405 to 409 (GSGFS), 411 to 415 (GSGFS), and 447 to 450 (GSGF).

It belongs to the bacterial flagellin family. As to quaternary structure, heteromer of flaA and flaB.

It is found in the secreted. It localises to the bacterial flagellum. Flagellin is the subunit protein which polymerizes to form the filaments of bacterial flagella. The polypeptide is Flagellin A (flaA) (Campylobacter jejuni).